The sequence spans 117 residues: UPF0145 protein PH1682 (117 aa).

The protein belongs to the UPF0145 family.

The chain is UPF0145 protein PH1682 from Pyrococcus horikoshii (strain ATCC 700860 / DSM 12428 / JCM 9974 / NBRC 100139 / OT-3).